The primary structure comprises 57 residues: Large ribosomal subunit protein bL32 (57 aa).

This sequence belongs to the bacterial ribosomal protein bL32 family.

In Halalkalibacterium halodurans (strain ATCC BAA-125 / DSM 18197 / FERM 7344 / JCM 9153 / C-125) (Bacillus halodurans), this protein is Large ribosomal subunit protein bL32 (rpmF).